We begin with the raw amino-acid sequence, 248 residues long: Fasciclin-like arabinogalactan protein 19 (248 aa).

Positions 1 to 29 (MAKISSASCFRAIFLGALIILCLPHPSTG) are cleaved as a signal peptide. The 132-residue stretch at 35 to 166 (LERAIAILRV…IAVHGLADLL (132 aa)) folds into the FAS1 domain. 2 N-linked (GlcNAc...) asparagine glycosylation sites follow: asparagine 114 and asparagine 136. Positions 213 to 226 (SPSVEEVSPSPSWG) are enriched in low complexity. The disordered stretch occupies residues 213–248 (SPSVEEVSPSPSWGEGEEDFIVGDEGGPLDGRNNGF).

The protein belongs to the fasciclin-like AGP family.

The protein resides in the secreted. Its function is as follows. May be a cell surface adhesion protein. The polypeptide is Fasciclin-like arabinogalactan protein 19 (FLA19) (Arabidopsis thaliana (Mouse-ear cress)).